The primary structure comprises 140 residues: ATP synthase epsilon chain (140 aa).

Belongs to the ATPase epsilon chain family. F-type ATPases have 2 components, CF(1) - the catalytic core - and CF(0) - the membrane proton channel. CF(1) has five subunits: alpha(3), beta(3), gamma(1), delta(1), epsilon(1). CF(0) has three main subunits: a, b and c.

It is found in the cell inner membrane. In terms of biological role, produces ATP from ADP in the presence of a proton gradient across the membrane. This is ATP synthase epsilon chain from Legionella pneumophila (strain Lens).